We begin with the raw amino-acid sequence, 439 residues long: Arginine biosynthesis bifunctional protein ArgJ, mitochondrial (439 aa).

Substrate contacts are provided by Thr175, Lys201, Thr212, Glu301, Asn434, and Ser439. Catalysis depends on Thr212, which acts as the Nucleophile.

This sequence belongs to the ArgJ family. As to quaternary structure, heterodimer of an alpha and a beta chain. In terms of processing, the alpha and beta chains are autoproteolytically processed from a single precursor protein within the mitochondrion.

The protein localises to the mitochondrion matrix. It catalyses the reaction N(2)-acetyl-L-ornithine + L-glutamate = N-acetyl-L-glutamate + L-ornithine. It carries out the reaction L-glutamate + acetyl-CoA = N-acetyl-L-glutamate + CoA + H(+). The protein operates within amino-acid biosynthesis; L-arginine biosynthesis; L-ornithine and N-acetyl-L-glutamate from L-glutamate and N(2)-acetyl-L-ornithine (cyclic): step 1/1. Its pathway is amino-acid biosynthesis; L-arginine biosynthesis; N(2)-acetyl-L-ornithine from L-glutamate: step 1/4. In terms of biological role, catalyzes two activities which are involved in the cyclic version of arginine biosynthesis: the synthesis of acetylglutamate from glutamate and acetyl-CoA, and of ornithine by transacetylation between acetylornithine and glutamate. In Candida albicans (strain WO-1) (Yeast), this protein is Arginine biosynthesis bifunctional protein ArgJ, mitochondrial.